A 319-amino-acid polypeptide reads, in one-letter code: ATP-dependent 6-phosphofructokinase (319 aa).

ATP is bound at residue Gly11. 21-25 provides a ligand contact to ADP; sequence RAVVR. Residues 72 to 73 and 102 to 105 contribute to the ATP site; these read RY and GDGS. Mg(2+) is bound at residue Asp103. Residue 125 to 127 coordinates substrate; sequence TID. Asp127 (proton acceptor) is an active-site residue. ADP is bound at residue Arg154. Residues Arg162 and 169–171 contribute to the substrate site; that span reads MGR. Residues 185–187, Arg211, and 213–215 contribute to the ADP site; these read GAE and KKH. Substrate is bound by residues Glu222, Arg243, and 249 to 252; that span reads HVQR.

It belongs to the phosphofructokinase type A (PFKA) family. ATP-dependent PFK group I subfamily. Prokaryotic clade 'B1' sub-subfamily. In terms of assembly, homotetramer. The cofactor is Mg(2+).

It localises to the cytoplasm. It carries out the reaction beta-D-fructose 6-phosphate + ATP = beta-D-fructose 1,6-bisphosphate + ADP + H(+). Its pathway is carbohydrate degradation; glycolysis; D-glyceraldehyde 3-phosphate and glycerone phosphate from D-glucose: step 3/4. Its activity is regulated as follows. Allosterically activated by ADP and other diphosphonucleosides, and allosterically inhibited by phosphoenolpyruvate. Its function is as follows. Catalyzes the phosphorylation of D-fructose 6-phosphate to fructose 1,6-bisphosphate by ATP, the first committing step of glycolysis. In Listeria monocytogenes serotype 4a (strain HCC23), this protein is ATP-dependent 6-phosphofructokinase.